A 144-amino-acid chain; its full sequence is Large ribosomal subunit protein uL13 (144 aa).

This sequence belongs to the universal ribosomal protein uL13 family. Part of the 50S ribosomal subunit.

Its function is as follows. This protein is one of the early assembly proteins of the 50S ribosomal subunit, although it is not seen to bind rRNA by itself. It is important during the early stages of 50S assembly. The polypeptide is Large ribosomal subunit protein uL13 (Desulfovibrio desulfuricans (strain ATCC 27774 / DSM 6949 / MB)).